A 450-amino-acid polypeptide reads, in one-letter code: tRNA modification GTPase MnmE (450 aa).

(6S)-5-formyl-5,6,7,8-tetrahydrofolate contacts are provided by arginine 25, glutamate 83, and lysine 122. In terms of domain architecture, TrmE-type G spans 218 to 377 (GFKVAIIGKP…QMEALLDSIG (160 aa)). A K(+)-binding site is contributed by asparagine 228. Residues 228-233 (NVGKSS), 247-253 (SDIAGTT), and 272-275 (DTAG) contribute to the GTP site. Serine 232 lines the Mg(2+) pocket. K(+) is bound by residues serine 247, isoleucine 249, and threonine 252. Threonine 253 lines the Mg(2+) pocket. Lysine 450 provides a ligand contact to (6S)-5-formyl-5,6,7,8-tetrahydrofolate.

Belongs to the TRAFAC class TrmE-Era-EngA-EngB-Septin-like GTPase superfamily. TrmE GTPase family. In terms of assembly, homodimer. Heterotetramer of two MnmE and two MnmG subunits. K(+) is required as a cofactor.

It localises to the cytoplasm. Exhibits a very high intrinsic GTPase hydrolysis rate. Involved in the addition of a carboxymethylaminomethyl (cmnm) group at the wobble position (U34) of certain tRNAs, forming tRNA-cmnm(5)s(2)U34. The sequence is that of tRNA modification GTPase MnmE from Sulfurovum sp. (strain NBC37-1).